Reading from the N-terminus, the 525-residue chain is Chromosomal replication initiator protein DnaA (525 aa).

A domain I, interacts with DnaA modulators region spans residues 1 to 71 (MNDFWQHCSA…ADLAREFWNT (71 aa)). The tract at residues 71–188 (TPIEVQFVLD…GEADSMYERS (118 aa)) is domain II. Residues 160-182 (AAAGRRTWRPGPGAAPANGGEAD) form a disordered region. A compositionally biased stretch (low complexity) spans 169–181 (PGPGAAPANGGEA). The interval 189-405 (KLNPVLTFDN…GALRKILAYS (217 aa)) is domain III, AAA+ region. Positions 233, 235, 236, and 237 each coordinate ATP. Residues 406 to 525 (KFHGREISIE…LHVLEQTLKG (120 aa)) form a domain IV, binds dsDNA region.

It belongs to the DnaA family. In terms of assembly, oligomerizes as a right-handed, spiral filament on DNA at oriC.

The protein resides in the cytoplasm. Functionally, plays an essential role in the initiation and regulation of chromosomal replication. ATP-DnaA binds to the origin of replication (oriC) to initiate formation of the DNA replication initiation complex once per cell cycle. Binds the DnaA box (a 9 base pair repeat at the origin) and separates the double-stranded (ds)DNA. Forms a right-handed helical filament on oriC DNA; dsDNA binds to the exterior of the filament while single-stranded (ss)DNA is stabiized in the filament's interior. The ATP-DnaA-oriC complex binds and stabilizes one strand of the AT-rich DNA unwinding element (DUE), permitting loading of DNA polymerase. After initiation quickly degrades to an ADP-DnaA complex that is not apt for DNA replication. Binds acidic phospholipids. This Burkholderia cenocepacia (strain ATCC BAA-245 / DSM 16553 / LMG 16656 / NCTC 13227 / J2315 / CF5610) (Burkholderia cepacia (strain J2315)) protein is Chromosomal replication initiator protein DnaA.